Here is a 602-residue protein sequence, read N- to C-terminus: uncharacterized protein (602 aa).

The protein belongs to the glycosyltransferase 2 family.

This is an uncharacterized protein from Rickettsia felis (strain ATCC VR-1525 / URRWXCal2) (Rickettsia azadi).